The chain runs to 648 residues: Zinc finger protein grt1 (648 aa).

The segment at residues 13–42 (ACENCRKRKVKCSGGDVCFECQKYNENCVY) is a DNA-binding region (zn(2)-C6 fungal-type).

In terms of assembly, monomer.

The protein localises to the nucleus. In terms of biological role, may be involved in the facilitation of anaphase progression in mitosis. The sequence is that of Zinc finger protein grt1 (grt1) from Schizosaccharomyces pombe (strain 972 / ATCC 24843) (Fission yeast).